A 67-amino-acid polypeptide reads, in one-letter code: Conotoxin AbVIN (67 aa).

An N-terminal signal peptide occupies residues V1 to T17. The propeptide occupies A18 to S40. Intrachain disulfides connect C43–C57, C50–C61, and C56–C66.

Belongs to the conotoxin O1 superfamily. As to expression, expressed by the venom duct.

It is found in the secreted. The chain is Conotoxin AbVIN from Conus abbreviatus (Abbreviated cone).